A 294-amino-acid polypeptide reads, in one-letter code: Type I ribosome-inactivating protein trichoanguina (294 aa).

An N-terminal signal peptide occupies residues 1 to 19; that stretch reads MALSFFFLAISLGSPTAIG. A glycan (N-linked (GlcNAc...) asparagine) is linked at asparagine 70. Active-site residues include glutamate 177 and arginine 180. An N-linked (GlcNAc...) asparagine glycan is attached at asparagine 220. Residues 265–294 constitute a propeptide that is removed on maturation; that stretch reads VGSEYDIPTTILHPGAMGMLHNQNGNYVTM.

It belongs to the ribosome-inactivating protein family. Type 1 RIP subfamily.

The catalysed reaction is Endohydrolysis of the N-glycosidic bond at one specific adenosine on the 28S rRNA.. Inhibits protein synthesis by depurinating 28S rRNA in ribosomes. The sequence is that of Type I ribosome-inactivating protein trichoanguina (TCA) from Trichosanthes anguina (Snake gourd).